The following is a 205-amino-acid chain: Probable peptidyl-tRNA hydrolase 2 (205 aa).

Polar residues predominate over residues 40–49 (YSSKNANKAS). Positions 40 to 68 (YSSKNANKASNPEKESPVSVSNDEDSESE) are disordered. A phosphoserine mark is found at Ser-65 and Ser-79.

The protein belongs to the PTH2 family.

The enzyme catalyses an N-acyl-L-alpha-aminoacyl-tRNA + H2O = an N-acyl-L-amino acid + a tRNA + H(+). Functionally, the natural substrate for this enzyme may be peptidyl-tRNAs which drop off the ribosome during protein synthesis. This is Probable peptidyl-tRNA hydrolase 2 from Schizosaccharomyces pombe (strain 972 / ATCC 24843) (Fission yeast).